Reading from the N-terminus, the 385-residue chain is Polyketide synthase 1 (385 aa).

Cysteine 157 is a catalytic residue.

Belongs to the thiolase-like superfamily. Chalcone/stilbene synthases family. In terms of tissue distribution, expressed in glandular trichomes.

The protein localises to the cytoplasm. Polyketide synthase responsible for the biosynthesis of secondary metabolites. The polypeptide is Polyketide synthase 1 (PKSG1) (Cannabis sativa (Hemp)).